A 100-amino-acid polypeptide reads, in one-letter code: Urease subunit gamma (100 aa).

This sequence belongs to the urease gamma subunit family. Heterotrimer of UreA (gamma), UreB (beta) and UreC (alpha) subunits. Three heterotrimers associate to form the active enzyme.

It localises to the cytoplasm. It catalyses the reaction urea + 2 H2O + H(+) = hydrogencarbonate + 2 NH4(+). It functions in the pathway nitrogen metabolism; urea degradation; CO(2) and NH(3) from urea (urease route): step 1/1. The protein is Urease subunit gamma of Cereibacter sphaeroides (strain ATCC 17029 / ATH 2.4.9) (Rhodobacter sphaeroides).